Consider the following 172-residue polypeptide: 6,7-dimethyl-8-ribityllumazine synthase (172 aa).

Residues phenylalanine 24, 58 to 60, and 82 to 84 each bind 5-amino-6-(D-ribitylamino)uracil; these read ALE and AVI. 87-88 lines the (2S)-2-hydroxy-3-oxobutyl phosphate pocket; the sequence is ET. Residue histidine 90 is the Proton donor of the active site. 5-amino-6-(D-ribitylamino)uracil is bound at residue asparagine 115. A (2S)-2-hydroxy-3-oxobutyl phosphate-binding site is contributed by arginine 129. A disordered region spans residues 150 to 172; it reads ALDQLGDDDEDEEEDEDDEEERA. Residues 154-172 are compositionally biased toward acidic residues; sequence LGDDDEDEEEDEDDEEERA.

This sequence belongs to the DMRL synthase family.

It carries out the reaction (2S)-2-hydroxy-3-oxobutyl phosphate + 5-amino-6-(D-ribitylamino)uracil = 6,7-dimethyl-8-(1-D-ribityl)lumazine + phosphate + 2 H2O + H(+). Its pathway is cofactor biosynthesis; riboflavin biosynthesis; riboflavin from 2-hydroxy-3-oxobutyl phosphate and 5-amino-6-(D-ribitylamino)uracil: step 1/2. Functionally, catalyzes the formation of 6,7-dimethyl-8-ribityllumazine by condensation of 5-amino-6-(D-ribitylamino)uracil with 3,4-dihydroxy-2-butanone 4-phosphate. This is the penultimate step in the biosynthesis of riboflavin. This is 6,7-dimethyl-8-ribityllumazine synthase from Burkholderia multivorans (strain ATCC 17616 / 249).